Reading from the N-terminus, the 588-residue chain is Aspartate--tRNA ligase (588 aa).

An L-aspartate-binding site is contributed by Glu172. Positions Gln196 to Lys199 are aspartate. Arg218 contacts L-aspartate. Residues Arg218–Glu220 and Gln227 contribute to the ATP site. His449 contacts L-aspartate. Glu483 is an ATP binding site. Arg490 contacts L-aspartate. An ATP-binding site is contributed by Gly535–Arg538.

The protein belongs to the class-II aminoacyl-tRNA synthetase family. Type 1 subfamily. Homodimer.

It is found in the cytoplasm. The enzyme catalyses tRNA(Asp) + L-aspartate + ATP = L-aspartyl-tRNA(Asp) + AMP + diphosphate. Functionally, catalyzes the attachment of L-aspartate to tRNA(Asp) in a two-step reaction: L-aspartate is first activated by ATP to form Asp-AMP and then transferred to the acceptor end of tRNA(Asp). In Histophilus somni (strain 2336) (Haemophilus somnus), this protein is Aspartate--tRNA ligase.